The primary structure comprises 61 residues: Photosystem II reaction center protein K (61 aa).

A propeptide spanning residues 1 to 24 (MLNIFNLVCICIHSVLYSSSFFSA) is cleaved from the precursor. Residues 36–56 (IVDIMPVIPLLFFLLAFVWQA) form a helical membrane-spanning segment.

This sequence belongs to the PsbK family. As to quaternary structure, PSII is composed of 1 copy each of membrane proteins PsbA, PsbB, PsbC, PsbD, PsbE, PsbF, PsbH, PsbI, PsbJ, PsbK, PsbL, PsbM, PsbT, PsbX, PsbY, PsbZ, Psb30/Ycf12, at least 3 peripheral proteins of the oxygen-evolving complex and a large number of cofactors. It forms dimeric complexes.

Its subcellular location is the plastid. It is found in the chloroplast thylakoid membrane. In terms of biological role, one of the components of the core complex of photosystem II (PSII). PSII is a light-driven water:plastoquinone oxidoreductase that uses light energy to abstract electrons from H(2)O, generating O(2) and a proton gradient subsequently used for ATP formation. It consists of a core antenna complex that captures photons, and an electron transfer chain that converts photonic excitation into a charge separation. The sequence is that of Photosystem II reaction center protein K from Glycine max (Soybean).